Consider the following 160-residue polypeptide: Small ribosomal subunit protein uS7 (160 aa).

This sequence belongs to the universal ribosomal protein uS7 family. In terms of assembly, part of the 30S ribosomal subunit. Contacts proteins S9 and S11.

Its function is as follows. One of the primary rRNA binding proteins, it binds directly to 16S rRNA where it nucleates assembly of the head domain of the 30S subunit. Is located at the subunit interface close to the decoding center, probably blocks exit of the E-site tRNA. In Rickettsia canadensis (strain McKiel), this protein is Small ribosomal subunit protein uS7.